The primary structure comprises 882 residues: Cutinase transcription factor 1 beta (882 aa).

Residues Met1–Ala20 are compositionally biased toward low complexity. The segment at Met1–Ala49 is disordered. Positions Cys53 to Cys81 form a DNA-binding region, zn(2)-C6 fungal-type. The disordered stretch occupies residues Asn117–Ser148. Over residues Ser130–Ser139 the composition is skewed to low complexity.

The protein resides in the nucleus. In Fusarium vanettenii (Neocosmospora pisi), this protein is Cutinase transcription factor 1 beta (CTF1-BETA).